The primary structure comprises 270 residues: Flagellar hook-basal body complex protein FlhO (270 aa).

It belongs to the flagella basal body rod proteins family.

Its function is as follows. Not required for motility. This is Flagellar hook-basal body complex protein FlhO (flhO) from Bacillus subtilis (strain 168).